Consider the following 510-residue polypeptide: Beta-glucosidase 34 (510 aa).

Residues 1-26 (MGNGGRCMVEVVILLVLMAMSQGCDA) form the signal peptide. N28 carries N-linked (GlcNAc...) asparagine glycosylation. Q52 is a binding site for a beta-D-glucoside. Residue N120 is glycosylated (N-linked (GlcNAc...) asparagine). A beta-D-glucoside is bound by residues H153 and 198–199 (NE). Residue E199 is the Proton donor of the active site. A disulfide bond links C218 and C226. Residues N279 and N331 are each glycosylated (N-linked (GlcNAc...) asparagine). Y342 contributes to the a beta-D-glucoside binding site. The N-linked (GlcNAc...) asparagine glycan is linked to N360. A beta-D-glucoside is bound by residues E415, W465, 472 to 473 (EW), and F481. The active-site Nucleophile is the E415.

The protein belongs to the glycosyl hydrolase 1 family.

It catalyses the reaction Hydrolysis of terminal, non-reducing beta-D-glucosyl residues with release of beta-D-glucose.. This chain is Beta-glucosidase 34 (BGLU34), found in Oryza sativa subsp. japonica (Rice).